The primary structure comprises 434 residues: E3 ubiquitin-protein ligase siah-1 (434 aa).

The interval 27–88 is disordered; it reads FEEDENAGPE…NGNTPSVTIP (62 aa). Residues 43–55 are compositionally biased toward low complexity; sequence SSSSASSQRSSAS. The span at 74–88 shows a compositional bias: polar residues; sequence MSNNQNGNTPSVTIP. Residues 171–206 form an RING-type; degenerate zinc finger; the sequence is CPVCLEYMLPPYMQCPSGHLVCSNCRPKLQCCPTCR. The SBD stretch occupies residues 220–415; sequence IANTVRFPCK…LGINVTISRI (196 aa). An SIAH-type; degenerate zinc finger spans residues 223–283; the sequence is TVRFPCKFSN…VMDHLKKVHK (61 aa). Zn(2+)-binding residues include Cys228, Cys235, His247, Cys251, Cys258, Cys265, His277, and His282.

This sequence belongs to the SINA (Seven in absentia) family. As to quaternary structure, interacts with tir-1.

The catalysed reaction is S-ubiquitinyl-[E2 ubiquitin-conjugating enzyme]-L-cysteine + [acceptor protein]-L-lysine = [E2 ubiquitin-conjugating enzyme]-L-cysteine + N(6)-ubiquitinyl-[acceptor protein]-L-lysine.. It functions in the pathway protein modification; protein ubiquitination. E3 ubiquitin-protein ligase that mediates ubiquitination and subsequent proteasomal degradation of target proteins. E3 ubiquitin ligases accept ubiquitin from an E2 ubiquitin-conjugating enzyme in the form of a thioester and then directly transfers the ubiquitin to targeted substrates. It probably triggers the ubiquitin-mediated degradation of different substrates. The polypeptide is E3 ubiquitin-protein ligase siah-1 (Caenorhabditis briggsae).